Reading from the N-terminus, the 105-residue chain is Large ribosomal subunit protein uL24 (105 aa).

The protein belongs to the universal ribosomal protein uL24 family. As to quaternary structure, part of the 50S ribosomal subunit.

One of two assembly initiator proteins, it binds directly to the 5'-end of the 23S rRNA, where it nucleates assembly of the 50S subunit. In terms of biological role, one of the proteins that surrounds the polypeptide exit tunnel on the outside of the subunit. This chain is Large ribosomal subunit protein uL24, found in Vibrio campbellii (strain ATCC BAA-1116).